Consider the following 668-residue polypeptide: Threonine--tRNA ligase (668 aa).

Positions 1–61 constitute a TGS domain; it reads MSDLKIALTH…ADGDQVEPVA (61 aa). Residues 265-564 are catalytic; it reads DHRKLGRDLD…LVEHYAGAFP (300 aa). Residues cysteine 358, histidine 409, and histidine 541 each contribute to the Zn(2+) site.

The protein belongs to the class-II aminoacyl-tRNA synthetase family. Homodimer. Requires Zn(2+) as cofactor.

The protein resides in the cytoplasm. It carries out the reaction tRNA(Thr) + L-threonine + ATP = L-threonyl-tRNA(Thr) + AMP + diphosphate + H(+). Functionally, catalyzes the attachment of threonine to tRNA(Thr) in a two-step reaction: L-threonine is first activated by ATP to form Thr-AMP and then transferred to the acceptor end of tRNA(Thr). Also edits incorrectly charged L-seryl-tRNA(Thr). The protein is Threonine--tRNA ligase of Nocardioides sp. (strain ATCC BAA-499 / JS614).